The chain runs to 303 residues: Coenzyme PQQ synthesis protein B (303 aa).

It belongs to the PqqB family.

Its pathway is cofactor biosynthesis; pyrroloquinoline quinone biosynthesis. May be involved in the transport of PQQ or its precursor to the periplasm. The polypeptide is Coenzyme PQQ synthesis protein B (Acinetobacter baumannii (strain AB0057)).